Consider the following 234-residue polypeptide: 2-C-methyl-D-erythritol 4-phosphate cytidylyltransferase (234 aa).

Belongs to the IspD/TarI cytidylyltransferase family. IspD subfamily.

It carries out the reaction 2-C-methyl-D-erythritol 4-phosphate + CTP + H(+) = 4-CDP-2-C-methyl-D-erythritol + diphosphate. It participates in isoprenoid biosynthesis; isopentenyl diphosphate biosynthesis via DXP pathway; isopentenyl diphosphate from 1-deoxy-D-xylulose 5-phosphate: step 2/6. Its function is as follows. Catalyzes the formation of 4-diphosphocytidyl-2-C-methyl-D-erythritol from CTP and 2-C-methyl-D-erythritol 4-phosphate (MEP). The chain is 2-C-methyl-D-erythritol 4-phosphate cytidylyltransferase from Syntrophus aciditrophicus (strain SB).